Reading from the N-terminus, the 189-residue chain is UPF0312 protein VV2_0231 (189 aa).

Positions 1–22 are cleaved as a signal peptide; that stretch reads MRKSVIATGLALMMAVPFAANA.

The protein belongs to the UPF0312 family. Type 1 subfamily.

The protein localises to the periplasm. The polypeptide is UPF0312 protein VV2_0231 (Vibrio vulnificus (strain CMCP6)).